The following is a 255-amino-acid chain: Type III pantothenate kinase (255 aa).

6 to 13 (DVGNTNTV) lines the ATP pocket. 108-111 (GADR) lines the substrate pocket. The active-site Proton acceptor is the D110. D130 provides a ligand contact to K(+). T133 is an ATP binding site. T185 provides a ligand contact to substrate.

Belongs to the type III pantothenate kinase family. Homodimer. NH4(+) is required as a cofactor. The cofactor is K(+).

It is found in the cytoplasm. The catalysed reaction is (R)-pantothenate + ATP = (R)-4'-phosphopantothenate + ADP + H(+). It functions in the pathway cofactor biosynthesis; coenzyme A biosynthesis; CoA from (R)-pantothenate: step 1/5. Functionally, catalyzes the phosphorylation of pantothenate (Pan), the first step in CoA biosynthesis. The sequence is that of Type III pantothenate kinase from Hyphomonas neptunium (strain ATCC 15444).